A 422-amino-acid chain; its full sequence is Histidine--tRNA ligase (422 aa).

This sequence belongs to the class-II aminoacyl-tRNA synthetase family. In terms of assembly, homodimer.

Its subcellular location is the cytoplasm. It catalyses the reaction tRNA(His) + L-histidine + ATP = L-histidyl-tRNA(His) + AMP + diphosphate + H(+). This chain is Histidine--tRNA ligase, found in Alcanivorax borkumensis (strain ATCC 700651 / DSM 11573 / NCIMB 13689 / SK2).